We begin with the raw amino-acid sequence, 117 residues long: Small ribosomal subunit protein eS25 (117 aa).

The interval 1–38 is disordered; that stretch reads MPPKKDAKSSAKQPQKTQKKKEGSGGGKAKKKKWSKGK. Basic residues predominate over residues 28–37; it reads KAKKKKWSKG.

This sequence belongs to the eukaryotic ribosomal protein eS25 family.

This is Small ribosomal subunit protein eS25 (RpS25) from Drosophila melanogaster (Fruit fly).